The chain runs to 368 residues: Germination protease (368 aa).

Positions 1 to 15 (MKEPLDLSKYSVRTD) are excised as a propeptide.

It belongs to the peptidase A25 family. As to quaternary structure, homotetramer. Post-translationally, autoproteolytically processed. The inactive tetrameric zymogen termed p46 autoprocesses to a smaller form termed p41, which is active only during spore germination.

It catalyses the reaction Endopeptidase action with P4 Glu or Asp, P1 preferably Glu &gt; Asp, P1' hydrophobic and P2' Ala.. Functionally, initiates the rapid degradation of small, acid-soluble proteins during spore germination. The chain is Germination protease from Bacillus anthracis (strain A0248).